The primary structure comprises 442 residues: 3-dehydroquinate synthase, chloroplastic (442 aa).

The N-terminal 58 residues, 1–58 (MAANTISLSNVAASKNLNSFQSRAFIAPPTIFFPVASAKSKPGELSLSSTTLSRSRVR), are a transit peptide targeting the chloroplast. Alanine 59 is subject to N-acetylalanine. Residues asparagine 119, 150-152 (DGE), lysine 155, 183-188 (GGVIGD), 208-209 (TT), lysine 221, lysine 230, and 248-251 (TLNT) each bind NAD(+). Position 263 (glutamate 263) interacts with a divalent metal cation. Lysine 305 is an NAD(+) binding site. A divalent metal cation-binding residues include histidine 326 and histidine 343.

It belongs to the sugar phosphate cyclases superfamily. Dehydroquinate synthase family. In terms of assembly, homodimer. Requires a divalent metal cation as cofactor. NAD(+) serves as cofactor.

It localises to the plastid. The protein resides in the chloroplast. The enzyme catalyses 7-phospho-2-dehydro-3-deoxy-D-arabino-heptonate = 3-dehydroquinate + phosphate. It functions in the pathway metabolic intermediate biosynthesis; chorismate biosynthesis; chorismate from D-erythrose 4-phosphate and phosphoenolpyruvate: step 2/7. Functionally, catalyzes the second step in the shikimate pathway. In Arabidopsis thaliana (Mouse-ear cress), this protein is 3-dehydroquinate synthase, chloroplastic (DHQS).